The sequence spans 176 residues: Adenine phosphoribosyltransferase (176 aa).

Belongs to the purine/pyrimidine phosphoribosyltransferase family. In terms of assembly, homodimer.

It localises to the cytoplasm. The catalysed reaction is AMP + diphosphate = 5-phospho-alpha-D-ribose 1-diphosphate + adenine. The protein operates within purine metabolism; AMP biosynthesis via salvage pathway; AMP from adenine: step 1/1. In terms of biological role, catalyzes a salvage reaction resulting in the formation of AMP, that is energically less costly than de novo synthesis. In Borreliella burgdorferi (strain ATCC 35210 / DSM 4680 / CIP 102532 / B31) (Borrelia burgdorferi), this protein is Adenine phosphoribosyltransferase.